Reading from the N-terminus, the 1047-residue chain is Formin-like protein 3 (1047 aa).

Gly-2 carries N-myristoyl glycine lipidation. Residues 22–462 form the GBD/FH3 domain; the sequence is VPMPDPTELE…AAFQRHNNIE (441 aa). The tract at residues 520-561 is disordered; the sequence is AVPVEAVAPPPPPPPPPPPPPPAPPLPSEVESIPIPPPPPPP. A compositionally biased stretch (pro residues) spans 527-546; that stretch reads APPPPPPPPPPPPPPAPPLP. The FH2 domain occupies 580–970; sequence IKKPIKTKFR…MREKLLAQEA (391 aa). In terms of domain architecture, DAD spans 1000–1037; that stretch reads DHRPVYEGKDGTIEDIITVLKSVPFTARTAKRGSRFFC.

This sequence belongs to the formin homology family.

It localises to the cytoplasm. The protein resides in the cell membrane. In terms of biological role, required for developmental angiogenesis, but not for vasculogenesis. This Danio rerio (Zebrafish) protein is Formin-like protein 3 (fmnl3).